A 128-amino-acid polypeptide reads, in one-letter code: KETAAMKFQRQHMDSGSSLSSSSDYCNKMMKVRNMTQESCKPVNTFVHESLQDVQAVCFQENVTCKNGQQNCHQSRSNMHITDCRQTSGSKYPNCLYQTSNMNRHIIIACEGNPYVPVHFDASVEDST.

The interval 1-20 (KETAAMKFQRQHMDSGSSLS) is disordered. 2 residues coordinate substrate: lysine 7 and arginine 10. Histidine 12 (proton acceptor) is an active-site residue. 4 disulfide bridges follow: cysteine 26-cysteine 84, cysteine 40-cysteine 95, cysteine 58-cysteine 110, and cysteine 65-cysteine 72. Asparagine 34 carries an N-linked (GlcNAc...) asparagine glycan. Substrate-binding positions include 41-45 (KPVNT), lysine 66, and arginine 85. Histidine 119 acts as the Proton donor in catalysis.

It belongs to the pancreatic ribonuclease family. Monomer. Interacts with and forms tight 1:1 complexes with RNH1. Dimerization of two such complexes may occur. Interaction with RNH1 inhibits this protein. In terms of tissue distribution, pancreas.

Its subcellular location is the secreted. It carries out the reaction an [RNA] containing cytidine + H2O = an [RNA]-3'-cytidine-3'-phosphate + a 5'-hydroxy-ribonucleotide-3'-[RNA].. The catalysed reaction is an [RNA] containing uridine + H2O = an [RNA]-3'-uridine-3'-phosphate + a 5'-hydroxy-ribonucleotide-3'-[RNA].. Endonuclease that catalyzes the cleavage of RNA on the 3' side of pyrimidine nucleotides. Acts on single-stranded and double-stranded RNA. This Choloepus hoffmanni (Hoffmann's two-fingered sloth) protein is Ribonuclease pancreatic (RNASE1).